Reading from the N-terminus, the 419-residue chain is G-protein coupled receptor 151 (419 aa).

The Extracellular portion of the chain corresponds to 1-41 (MLAAAFADSNSSSMNVSFAHLHFAGGYLPSDSQDWRTIIPA). Residues asparagine 10 and asparagine 15 are each glycosylated (N-linked (GlcNAc...) asparagine). The helical transmembrane segment at 42 to 62 (LLVAVCLVGFVGNLCVIGILL) threads the bilayer. Residues 63 to 71 (HNAWKGKPS) are Cytoplasmic-facing. Residues 72–92 (MIHSLILNLSLADLSLLLFSA) traverse the membrane as a helical segment. Over 93–116 (PIRATAYSKSVWDLGWFVCKSSDW) the chain is Extracellular. Cysteines 111 and 187 form a disulfide. Residues 117-137 (FIHTCMAAKSLTIVVVAKVCF) form a helical membrane-spanning segment. At 138 to 153 (MYASDPAKQVSIHNYT) the chain is on the cytoplasmic side. The helical transmembrane segment at 154 to 174 (IWSVLVAIWTVASLLPLPEWF) threads the bilayer. Topologically, residues 175 to 201 (FSTIRHHEGVEMCLVDVPAVAEEFMSM) are extracellular. Residues 202–222 (FGKLYPLLAFGLPLFFASFYF) traverse the membrane as a helical segment. Residues 223–252 (WRAYDQCKKRGTKTQNLRNQIRSKQVTVML) lie on the Cytoplasmic side of the membrane. Residues 253–273 (LSIAIISALLWLPEWVAWLWV) form a helical membrane-spanning segment. The Extracellular portion of the chain corresponds to 274-286 (WHLKAAGPAPPQG). Residues 287-307 (FIALSQVLMFSISSANPLIFL) form a helical membrane-spanning segment. Topologically, residues 308-419 (VMSEEFREGL…EDQETGEGVK (112 aa)) are cytoplasmic. Residues 330–419 (PTVSESQETP…EDQETGEGVK (90 aa)) form a disordered region. The span at 332–341 (VSESQETPAG) shows a compositional bias: polar residues. Positions 410–419 (EDQETGEGVK) are enriched in acidic residues.

It belongs to the G-protein coupled receptor 1 family. High expression in the spinal cord.

It localises to the cell membrane. Proton-sensing G-protein coupled receptor. This Homo sapiens (Human) protein is G-protein coupled receptor 151 (GPR151).